The primary structure comprises 139 residues: Large ribosomal subunit protein uL16 (139 aa).

A compositionally biased stretch (basic residues) spans 1–17; the sequence is MLIPRRTKHRKQHHPRR. The disordered stretch occupies residues 1 to 24; that stretch reads MLIPRRTKHRKQHHPRRTGAASGG.

This sequence belongs to the universal ribosomal protein uL16 family. As to quaternary structure, part of the 50S ribosomal subunit.

In terms of biological role, binds 23S rRNA and is also seen to make contacts with the A and possibly P site tRNAs. The chain is Large ribosomal subunit protein uL16 from Beutenbergia cavernae (strain ATCC BAA-8 / DSM 12333 / CCUG 43141 / JCM 11478 / NBRC 16432 / NCIMB 13614 / HKI 0122).